A 517-amino-acid chain; its full sequence is ATP synthase subunit alpha (517 aa).

Position 174-181 (174-181) interacts with ATP; the sequence is GDRQTGKT.

The protein belongs to the ATPase alpha/beta chains family. In terms of assembly, F-type ATPases have 2 components, CF(1) - the catalytic core - and CF(0) - the membrane proton channel. CF(1) has five subunits: alpha(3), beta(3), gamma(1), delta(1), epsilon(1). CF(0) has three main subunits: a(1), b(2) and c(9-12). The alpha and beta chains form an alternating ring which encloses part of the gamma chain. CF(1) is attached to CF(0) by a central stalk formed by the gamma and epsilon chains, while a peripheral stalk is formed by the delta and b chains.

Its subcellular location is the cell inner membrane. The catalysed reaction is ATP + H2O + 4 H(+)(in) = ADP + phosphate + 5 H(+)(out). Functionally, produces ATP from ADP in the presence of a proton gradient across the membrane. The alpha chain is a regulatory subunit. The sequence is that of ATP synthase subunit alpha from Delftia acidovorans (strain DSM 14801 / SPH-1).